The chain runs to 406 residues: MAAGAGAGSAPRWLRALSEPLSAAQLRRLEEHRYSAAGVSLLEPPLQLYWTWLLQWIPLWMAPNSITLLGLAVNVVTTLVLISYCPTATEEAPYWTYLLCALGLFIYQSLDAIDGKQARRTNSCSPLGELFDHGCDSLSTVFMAVGASIAARLGTYPDWFFFCSFIGMFVFYCAHWQTYVSGMLRFGKVDVTEIQIALVIVFVLSAFGGATMWDYTIPILEIKLKILPVLGFLGGVIFSCSNYFHVILHGGVGKNGSTIAGTSVLSPGLHIGLIIILAIMIYKKSATDVFEKHPCLYILMFGCVFAKVSQKLVVAHMTKSELYLQDTVFLGPGLLFLDQYFNNFIDEYVVLWMAMVISSFDMVIYFSALCLQISRHLHLNIFKTACHQAPEQVQVLSSKSHQNNMD.

Position 2 is an N-acetylalanine (Ala-2). Over 2–62 (AAGAGAGSAP…LLQWIPLWMA (61 aa)) the chain is Cytoplasmic. The helical transmembrane segment at 63 to 83 (PNSITLLGLAVNVVTTLVLIS) threads the bilayer. Asn-64 is a binding site for CDP-choline. The Lumenal segment spans residues 84-93 (YCPTATEEAP). Residues 94 to 118 (YWTYLLCALGLFIYQSLDAIDGKQA) traverse the membrane as a helical segment. Mg(2+) contacts are provided by Asp-111 and Asp-114. Residue Arg-119 coordinates CDP-choline. Residues 119–125 (RRTNSCS) lie on the Cytoplasmic side of the membrane. A helical membrane pass occupies residues 126–150 (PLGELFDHGCDSLSTVFMAVGASIA). Asp-132 serves as a coordination point for Mg(2+). His-133 functions as the Proton acceptor in the catalytic mechanism. Asp-136 is a Mg(2+) binding site. Residues 151-160 (ARLGTYPDWF) are Lumenal-facing. Residues 161–179 (FFCSFIGMFVFYCAHWQTY) form a helical membrane-spanning segment. The Cytoplasmic portion of the chain corresponds to 180 to 190 (VSGMLRFGKVD). A helical membrane pass occupies residues 191-207 (VTEIQIALVIVFVLSAF). Topologically, residues 208-222 (GGATMWDYTIPILEI) are lumenal. A helical transmembrane segment spans residues 223–248 (KLKILPVLGFLGGVIFSCSNYFHVIL). The Cytoplasmic portion of the chain corresponds to 249 to 265 (HGGVGKNGSTIAGTSVL). Residues 266 to 281 (SPGLHIGLIIILAIMI) traverse the membrane as a helical segment. Residues 282–293 (YKKSATDVFEKH) lie on the Lumenal side of the membrane. Residues 294–316 (PCLYILMFGCVFAKVSQKLVVAH) form a helical membrane-spanning segment. Residues 317 to 329 (MTKSELYLQDTVF) lie on the Cytoplasmic side of the membrane. Residues 330–339 (LGPGLLFLDQ) traverse the membrane as a helical segment. At 340–346 (YFNNFID) the chain is on the lumenal side. Residues 347–376 (EYVVLWMAMVISSFDMVIYFSALCLQISRH) form a helical membrane-spanning segment. Over 377–406 (LHLNIFKTACHQAPEQVQVLSSKSHQNNMD) the chain is Cytoplasmic.

Belongs to the CDP-alcohol phosphatidyltransferase class-I family. It depends on Mg(2+) as a cofactor. Requires Mn(2+) as cofactor. As to expression, highly expressed in testis, colon, small intestine, heart, prostate and spleen. Also detected in kidney, skeletal muscle, pancreas, leukocytes, ovary and thymus. Weakly expressed in the brain, placenta and lung. Overexpressed in cancerous breast epithelial cell lines.

It is found in the golgi apparatus membrane. It catalyses the reaction CDP-choline + a 1,2-diacyl-sn-glycerol = a 1,2-diacyl-sn-glycero-3-phosphocholine + CMP + H(+). The catalysed reaction is 1-octadecanoyl-2-(5Z,8Z,11Z,14Z-eicosatetraenoyl)-sn-glycerol + CDP-choline = 1-octadecanoyl-2-(5Z,8Z,11Z,14Z-eicosatetraenoyl)-sn-glycero-3-phosphocholine + CMP + H(+). The enzyme catalyses 1-hexadecanoyl-2-(9Z-octadecenoyl)-sn-glycerol + CDP-choline = 1-hexadecanoyl-2-(9Z-octadecenoyl)-sn-glycero-3-phosphocholine + CMP + H(+). It carries out the reaction 1-hexadecanoyl-2-(4Z,7Z,10Z,13Z,16Z,19Z-docosahexaenoyl)-sn-glycerol + CDP-choline = 1-hexadecanoyl-2-(4Z,7Z,10Z,13Z,16Z,19Z-docosahexaenoyl)-sn-glycero-3-phosphocholine + CMP + H(+). It catalyses the reaction 1,2-dioctanoyl-sn-glycerol + CDP-choline = 1,2-dioctanoyl-sn-glycero-3-phosphocholine + CMP + H(+). Its pathway is phospholipid metabolism; phosphatidylcholine biosynthesis; phosphatidylcholine from phosphocholine: step 2/2. Its function is as follows. Catalyzes the final step of de novo phosphatidylcholine (PC) synthesis, i.e. the transfer of choline phosphate from CDP-choline to the free hydroxyl of a diacylglycerol (DAG), producing a PC. It thereby plays a central role in the formation and maintenance of vesicular membranes. The protein is Cholinephosphotransferase 1 of Homo sapiens (Human).